A 152-amino-acid polypeptide reads, in one-letter code: Xanthine-guanine phosphoribosyltransferase (152 aa).

5-phospho-alpha-D-ribose 1-diphosphate is bound by residues R37 to G38, R69, and D88 to T96. Residue R69 coordinates GMP. Mg(2+) is bound at residue D89. Guanine-binding residues include D92 and I135. D92 and I135 together coordinate xanthine. GMP-binding positions include D92–T96 and W134–I135.

It belongs to the purine/pyrimidine phosphoribosyltransferase family. XGPT subfamily. Homotetramer. It depends on Mg(2+) as a cofactor.

Its subcellular location is the cell inner membrane. It catalyses the reaction GMP + diphosphate = guanine + 5-phospho-alpha-D-ribose 1-diphosphate. The catalysed reaction is XMP + diphosphate = xanthine + 5-phospho-alpha-D-ribose 1-diphosphate. The enzyme catalyses IMP + diphosphate = hypoxanthine + 5-phospho-alpha-D-ribose 1-diphosphate. It participates in purine metabolism; GMP biosynthesis via salvage pathway; GMP from guanine: step 1/1. The protein operates within purine metabolism; XMP biosynthesis via salvage pathway; XMP from xanthine: step 1/1. Purine salvage pathway enzyme that catalyzes the transfer of the ribosyl-5-phosphate group from 5-phospho-alpha-D-ribose 1-diphosphate (PRPP) to the N9 position of the 6-oxopurines guanine and xanthine to form the corresponding ribonucleotides GMP (guanosine 5'-monophosphate) and XMP (xanthosine 5'-monophosphate), with the release of PPi. To a lesser extent, also acts on hypoxanthine. The protein is Xanthine-guanine phosphoribosyltransferase of Escherichia fergusonii (strain ATCC 35469 / DSM 13698 / CCUG 18766 / IAM 14443 / JCM 21226 / LMG 7866 / NBRC 102419 / NCTC 12128 / CDC 0568-73).